The primary structure comprises 329 residues: Nuclear pore complex protein NUP35 (329 aa).

Disordered regions lie at residues Asn-48–Lys-105 and Val-123–Glu-167. The segment covering Val-123–Thr-139 has biased composition (polar residues). Positions Leu-183–Ala-264 constitute an RRM Nup35-type domain. The tract at residues Asn-271–Ser-315 is disordered. Positions Ser-282–Pro-306 are enriched in polar residues.

The protein belongs to the Nup35 family. In terms of assembly, part of the nuclear pore complex (NPC). The NPC has an eight-fold symmetrical structure comprising a central transport channel and two rings, the cytoplasmic and nuclear rings, to which eight filaments are attached. The cytoplasmic filaments have loose ends, while the nuclear filaments are joined in a distal ring, forming a nuclear basket. NPCs are highly dynamic in configuration and composition, and can be devided in 3 subcomplexes, the NUP62 subcomplex, the NUP107-160 subcomplex and the NUP93 subcomplex, containing approximately 30 different nucleoporin proteins.

It localises to the nucleus. The protein resides in the nuclear pore complex. This chain is Nuclear pore complex protein NUP35, found in Arabidopsis thaliana (Mouse-ear cress).